The chain runs to 209 residues: Large ribosomal subunit protein uL3 (209 aa).

Positions 125–148 (RHGQSRGPMAHGSRYHRRPGSMGP) are disordered.

This sequence belongs to the universal ribosomal protein uL3 family. As to quaternary structure, part of the 50S ribosomal subunit. Forms a cluster with proteins L14 and L19.

One of the primary rRNA binding proteins, it binds directly near the 3'-end of the 23S rRNA, where it nucleates assembly of the 50S subunit. This is Large ribosomal subunit protein uL3 from Lysinibacillus sphaericus (strain C3-41).